Here is a 327-residue protein sequence, read N- to C-terminus: Undecaprenyl-phosphate 4-deoxy-4-formamido-L-arabinose transferase (327 aa).

Transmembrane regions (helical) follow at residues 236–256 (LSVF…LLVV) and 270–290 (VFML…AMGL).

It belongs to the glycosyltransferase 2 family.

Its subcellular location is the cell inner membrane. It catalyses the reaction UDP-4-deoxy-4-formamido-beta-L-arabinose + di-trans,octa-cis-undecaprenyl phosphate = 4-deoxy-4-formamido-alpha-L-arabinopyranosyl di-trans,octa-cis-undecaprenyl phosphate + UDP. It participates in glycolipid biosynthesis; 4-amino-4-deoxy-alpha-L-arabinose undecaprenyl phosphate biosynthesis; 4-amino-4-deoxy-alpha-L-arabinose undecaprenyl phosphate from UDP-4-deoxy-4-formamido-beta-L-arabinose and undecaprenyl phosphate: step 1/2. It functions in the pathway bacterial outer membrane biogenesis; lipopolysaccharide biosynthesis. Catalyzes the transfer of 4-deoxy-4-formamido-L-arabinose from UDP to undecaprenyl phosphate. The modified arabinose is attached to lipid A and is required for resistance to polymyxin and cationic antimicrobial peptides. The sequence is that of Undecaprenyl-phosphate 4-deoxy-4-formamido-L-arabinose transferase from Enterobacter sp. (strain 638).